Consider the following 554-residue polypeptide: Folate synthesis bifunctional protein, mitochondrial (554 aa).

The N-terminal 42 residues, 1–42, are a transit peptide targeting the mitochondrion; sequence MAPLLSQTLIHTGRFLLRRFLEPPPAVISAVAASRVCFHRYY. The tract at residues 90–215 is HPPK; sequence VIALGSNIGN…SFVLAPLVDL (126 aa). The 269-residue stretch at 273-541 folds into the Pterin-binding domain; it reads THVMGILNLT…NVRHNADAAK (269 aa). The tract at residues 275-554 is DHPS; sequence VMGILNLTPD…AMLRRRRSKG (280 aa). N280 serves as a coordination point for Mg(2+). (7,8-dihydropterin-6-yl)methyl diphosphate contacts are provided by residues T320, D357, N376, D449, K494, and 529–531; that span reads RVH.

It in the N-terminal section; belongs to the HPPK family. The protein in the C-terminal section; belongs to the DHPS family. Mg(2+) serves as cofactor. Ubiquitous.

It is found in the mitochondrion. The enzyme catalyses 6-hydroxymethyl-7,8-dihydropterin + ATP = (7,8-dihydropterin-6-yl)methyl diphosphate + AMP + H(+). It carries out the reaction (7,8-dihydropterin-6-yl)methyl diphosphate + 4-aminobenzoate = 7,8-dihydropteroate + diphosphate. It participates in cofactor biosynthesis; tetrahydrofolate biosynthesis; 2-amino-4-hydroxy-6-hydroxymethyl-7,8-dihydropteridine diphosphate from 7,8-dihydroneopterin triphosphate: step 4/4. The protein operates within cofactor biosynthesis; tetrahydrofolate biosynthesis; 7,8-dihydrofolate from 2-amino-4-hydroxy-6-hydroxymethyl-7,8-dihydropteridine diphosphate and 4-aminobenzoate: step 1/2. Functionally, catalyzes the first two consecutive steps of tetrahydrofolate biosynthesis. This Arabidopsis thaliana (Mouse-ear cress) protein is Folate synthesis bifunctional protein, mitochondrial.